We begin with the raw amino-acid sequence, 120 residues long: MKLTRRESKERRHRRVRGKVQGSPERPRLAVFRSNEHIYAQVIDDTQHHTLAAASTVEPELKSSLASGSNCEASAQIGKLIAARSLEKGITKVVFDRGGNLYHGRIKALAEAAREAGLDF.

Positions 1 to 10 (MKLTRRESKE) are enriched in basic and acidic residues. Residues 1 to 26 (MKLTRRESKERRHRRVRGKVQGSPER) are disordered.

It belongs to the universal ribosomal protein uL18 family. Part of the 50S ribosomal subunit; part of the 5S rRNA/L5/L18/L25 subcomplex. Contacts the 5S and 23S rRNAs.

Its function is as follows. This is one of the proteins that bind and probably mediate the attachment of the 5S RNA into the large ribosomal subunit, where it forms part of the central protuberance. This chain is Large ribosomal subunit protein uL18, found in Nostoc sp. (strain PCC 7120 / SAG 25.82 / UTEX 2576).